The primary structure comprises 241 residues: Sugar fermentation stimulation protein homolog (241 aa).

The protein belongs to the SfsA family.

This is Sugar fermentation stimulation protein homolog from Hahella chejuensis (strain KCTC 2396).